The sequence spans 290 residues: 4-hydroxybenzoate octaprenyltransferase (290 aa).

A run of 8 helical transmembrane segments spans residues 21 to 41 (IGTL…VKGM), 44 to 64 (LSIL…GCVI), 84 to 104 (LATG…LVFC), 106 to 126 (FILV…AVFL), 142 to 162 (LFLG…SIEA), 212 to 232 (IISL…YLSQ), 235 to 255 (TSYF…CKLI), and 267 to 287 (FLNN…GIFF).

This sequence belongs to the UbiA prenyltransferase family. It depends on Mg(2+) as a cofactor.

It localises to the cell inner membrane. The catalysed reaction is all-trans-octaprenyl diphosphate + 4-hydroxybenzoate = 4-hydroxy-3-(all-trans-octaprenyl)benzoate + diphosphate. It participates in cofactor biosynthesis; ubiquinone biosynthesis. In terms of biological role, catalyzes the prenylation of para-hydroxybenzoate (PHB) with an all-trans polyprenyl group. Mediates the second step in the final reaction sequence of ubiquinone-8 (UQ-8) biosynthesis, which is the condensation of the polyisoprenoid side chain with PHB, generating the first membrane-bound Q intermediate 3-octaprenyl-4-hydroxybenzoate. The polypeptide is 4-hydroxybenzoate octaprenyltransferase (Pasteurella multocida (strain Pm70)).